A 59-amino-acid chain; its full sequence is Large ribosomal subunit protein bL32 (59 aa).

The segment covering 1 to 15 (MAVPKRKTSKSKRDM) has biased composition (basic residues). A disordered region spans residues 1-21 (MAVPKRKTSKSKRDMRRASNS).

It belongs to the bacterial ribosomal protein bL32 family.

This is Large ribosomal subunit protein bL32 from Alkaliphilus metalliredigens (strain QYMF).